We begin with the raw amino-acid sequence, 185 residues long: Translation initiation factor IF-3 (185 aa).

It belongs to the IF-3 family. As to quaternary structure, monomer.

It localises to the cytoplasm. IF-3 binds to the 30S ribosomal subunit and shifts the equilibrium between 70S ribosomes and their 50S and 30S subunits in favor of the free subunits, thus enhancing the availability of 30S subunits on which protein synthesis initiation begins. The chain is Translation initiation factor IF-3 from Streptococcus pneumoniae (strain Hungary19A-6).